Consider the following 276-residue polypeptide: Large ribosomal subunit protein uL2 (276 aa).

A disordered region spans residues 225–276; sequence MNPNDHPHGGGEGRNPIGRNPVTPWGKPALGAKTRKKKNPSNRFIVKRRGKK. The span at 257-276 shows a compositional bias: basic residues; that stretch reads KTRKKKNPSNRFIVKRRGKK.

It belongs to the universal ribosomal protein uL2 family. In terms of assembly, part of the 50S ribosomal subunit. Forms a bridge to the 30S subunit in the 70S ribosome.

In terms of biological role, one of the primary rRNA binding proteins. Required for association of the 30S and 50S subunits to form the 70S ribosome, for tRNA binding and peptide bond formation. It has been suggested to have peptidyltransferase activity; this is somewhat controversial. Makes several contacts with the 16S rRNA in the 70S ribosome. In Desulfitobacterium hafniense (strain DSM 10664 / DCB-2), this protein is Large ribosomal subunit protein uL2.